Consider the following 521-residue polypeptide: DNA damage-binding protein cmr1 (521 aa).

The disordered stretch occupies residues 36-75 (DKIIPKPAPPKPKRASTPRVKREPVKKEAARPTRQSSRLA). A compositionally biased stretch (basic and acidic residues) spans 55-66 (VKREPVKKEAAR). WD repeat units lie at residues 183 to 224 (IVPQ…PKIE), 242 to 282 (THSR…STEI), 333 to 373 (LTDH…GKGD), 382 to 422 (EHES…EWKA), and 490 to 521 (DGIT…CLWM).

The protein belongs to the WD repeat DDB2/WDR76 family.

Functionally, DNA-binding protein that binds to both single- and double-stranded DNA. Binds preferentially to UV-damaged DNA. May be involved in DNA-metabolic processes. This chain is DNA damage-binding protein cmr1, found in Neurospora crassa (strain ATCC 24698 / 74-OR23-1A / CBS 708.71 / DSM 1257 / FGSC 987).